A 157-amino-acid chain; its full sequence is Putative glutathione-dependent formaldehyde-activating enzyme (157 aa).

The 132-residue stretch at 3–134 (LEGSCHCGAV…WVEIESREQD (132 aa)) folds into the CENP-V/GFA domain. Cysteine 7, cysteine 9, cysteine 27, cysteine 29, cysteine 32, cysteine 79, and cysteine 82 together coordinate Zn(2+).

The protein belongs to the Gfa family. Zn(2+) serves as cofactor.

The catalysed reaction is S-(hydroxymethyl)glutathione = glutathione + formaldehyde. Its pathway is one-carbon metabolism; formaldehyde degradation; formate from formaldehyde (glutathione route): step 1/3. Functionally, catalyzes the condensation of formaldehyde and glutathione to S-hydroxymethylglutathione. In Halomonas elongata (strain ATCC 33173 / DSM 2581 / NBRC 15536 / NCIMB 2198 / 1H9), this protein is Putative glutathione-dependent formaldehyde-activating enzyme.